The sequence spans 66 residues: Ribosome biogenesis protein Nop10 (66 aa).

It belongs to the NOP10 family.

Its function is as follows. Involved in ribosome biogenesis; more specifically in 18S rRNA pseudouridylation and in cleavage of pre-rRNA. The sequence is that of Ribosome biogenesis protein Nop10 from Desulfurococcus amylolyticus (strain DSM 18924 / JCM 16383 / VKM B-2413 / 1221n) (Desulfurococcus kamchatkensis).